Reading from the N-terminus, the 587-residue chain is Serine/threonine-protein phosphatase 2A 65 kDa regulatory subunit A gamma isoform (587 aa).

Ser-2 carries the N-acetylserine modification. 14 HEAT repeats span residues 2-42 (SMVD…ALGE), 44-80 (RTRK…YVGG), 81-119 (VEYA…QMRE), 158-194 (DVLK…AATI), 197-235 (AHLK…LLEP), 236-274 (QDCV…AVGP), 276-313 (PTRT…ILNP), 314-352 (ELAI…VLGK), 353-391 (DATI…VIGI), 393-430 (LLSQ…QLGV), 432-469 (FFDE…EFGP), 470-508 (EWAM…VMGS), 509-547 (EITC…IVDQ), and 549-586 (VVEN…VMMS).

This sequence belongs to the phosphatase 2A regulatory subunit A family. In terms of assembly, PP2A consists of a common heterodimeric core enzyme, composed of a 36 kDa catalytic subunit (subunit C) and a 65 kDa constant regulatory subunit (subunit A), that associates with a variety of regulatory subunits such as subunits B (the R2/B/PR55/B55, R3/B''/PR72/PR130/PR59 and R5/B'/B56 families). Interacts with CHIP. Interacts with SRK2E/OST1. In terms of processing, ubiquitinated. CHIP-mediated ubiquitination enhances phosphatase activity after an abiotic stress such as low temperature or darkness. Expressed ubiquitously at stable levels. However, higher protein levels in roots and flowers (at protein level).

The protein resides in the cytoplasm. The protein localises to the cytosol. It localises to the nucleus. The A subunit of protein phosphatase 2A serves as a scaffolding molecule to coordinate the assembly of the catalytic subunit and a variable regulatory B subunit. Involved during developmental process such as seedling and floral developments. Seems to act as a negative regulator of PP2A catalytic activity. The polypeptide is Serine/threonine-protein phosphatase 2A 65 kDa regulatory subunit A gamma isoform (PP2AA3) (Arabidopsis thaliana (Mouse-ear cress)).